Reading from the N-terminus, the 166-residue chain is UPF0134 protein MPN_138 (166 aa).

This sequence belongs to the UPF0134 family.

This is UPF0134 protein MPN_138 from Mycoplasma pneumoniae (strain ATCC 29342 / M129 / Subtype 1) (Mycoplasmoides pneumoniae).